The following is a 1241-amino-acid chain: uncharacterized protein (1241 aa).

The stretch at 21 to 49 forms a coiled coil; it reads ILNDNVREINIAKKEIKQLREYVGILQQN. 3 helical membrane-spanning segments follow: residues 261-281, 918-938, and 947-967; these read VNAI…FVLG, AVVG…GLVA, and GHIV…VIGG. Residues 1005 to 1028 are disordered; it reads THIGKEDSNNGVSTSTNKRSIGKA. Over residues 1013–1028 the composition is skewed to polar residues; the sequence is NNGVSTSTNKRSIGKA.

It is found in the host membrane. This is an uncharacterized protein from Diadromus pulchellus (Parasitic wasp).